The primary structure comprises 1099 residues: ATP-dependent helicase/deoxyribonuclease subunit B (1099 aa).

4 residues coordinate [4Fe-4S] cluster: Cys-766, Cys-1056, Cys-1059, and Cys-1065.

This sequence belongs to the helicase family. AddB/RexB type 2 subfamily. In terms of assembly, heterodimer of AddA and RexB. The cofactor is Mg(2+). [4Fe-4S] cluster serves as cofactor.

Functionally, the heterodimer acts as both an ATP-dependent DNA helicase and an ATP-dependent, dual-direction single-stranded exonuclease. Recognizes the chi site generating a DNA molecule suitable for the initiation of homologous recombination. This subunit has 5' -&gt; 3' nuclease activity but not helicase activity. This chain is ATP-dependent helicase/deoxyribonuclease subunit B, found in Lactococcus lactis subsp. cremoris (strain SK11).